A 70-amino-acid chain; its full sequence is Brevinin-ALb (70 aa).

The signal sequence occupies residues 1–22; sequence MFTLKKSLLLLFFLGTINLSLC. A propeptide spanning residues 23 to 46 is cleaved from the precursor; that stretch reads EQERDADEEERRDDDEMDVEVEKR. A disulfide bridge links Cys64 with Cys70.

Expressed by the skin glands.

Its subcellular location is the secreted. In terms of biological role, antimicrobial peptide with activity against Gram-positive and Gram-negative bacteria and against fungi. Has been tested against S.aureus (MIC=5.5 ug/mL), E.coli (MIC=6.5 ug/mL), B.dysenteriae (MIC=2.2 ug/mL), and C.albicans (MIC=7.5 ug/mL). Can regulate or mediate antimicrobial response by stimulating mast cell degranulation. Induces histamine release. Shows cytotoxicity toward solid tumor cell line HepG2. Also shows a potent hemolytic activity (LD(50)=5 ug/ml). This chain is Brevinin-ALb, found in Amolops loloensis (Lolokou Sucker Frog).